Here is a 93-residue protein sequence, read N- to C-terminus: Large ribosomal subunit protein eL42 (93 aa).

Zn(2+)-binding residues include Cys11, Cys14, Cys71, and Cys74. The segment at 11–74 (CRYCGKHTLH…VNIRFRCTEC (64 aa)) adopts a C4-type zinc-finger fold.

The protein belongs to the eukaryotic ribosomal protein eL42 family. In terms of assembly, part of the 50S ribosomal subunit. Requires Zn(2+) as cofactor.

Its function is as follows. Binds to the 23S rRNA. This Archaeoglobus fulgidus (strain ATCC 49558 / DSM 4304 / JCM 9628 / NBRC 100126 / VC-16) protein is Large ribosomal subunit protein eL42.